A 235-amino-acid chain; its full sequence is Chalcone--flavanone isomerase 1 (235 aa).

Residues T50 and S192 each coordinate substrate.

Belongs to the chalcone isomerase family.

It catalyses the reaction a chalcone = a flavanone.. It participates in secondary metabolite biosynthesis; flavonoid biosynthesis. Catalyzes the intramolecular cyclization of bicyclic chalcones into tricyclic (S)-flavanones. Responsible for the isomerization of 4,2',4',6'-tetrahydroxychalcone (also termed chalcone) into naringenin. The sequence is that of Chalcone--flavanone isomerase 1 (CHI1) from Chrysanthemum morifolium (Florist's daisy).